The chain runs to 92 residues: Alpha-conotoxin FrXXA (92 aa).

The N-terminal stretch at 1–24 is a signal peptide; that stretch reads MPKLEMMLLVLLILPLSYFDSAGG. Positions 25–45 are excised as a propeptide; it reads QAVKVDGHGDGMDRYLQRDDR. 4 disulfides stabilise this stretch: C63–C72, C68–C80, C73–C90, and C78–C92.

This sequence belongs to the conotoxin D superfamily. In terms of assembly, homodimer; disulfide-linked. The homodimer contains 10 disulfide bonds. As to expression, expressed by the venom duct.

Its subcellular location is the secreted. In terms of biological role, alpha-conotoxins act on postsynaptic membranes, they bind to the nicotinic acetylcholine receptors (nAChR) and thus inhibit them. Through its two C-terminal domains, this homodimeric protein would bind to two nAChR allosteric sites, located outside the nAChR C-loop of the principal binding face and at the adjacent binding interface in a clockwise direction. This toxin blocks both neuronal and muscular subtypes: human alpha-7/CHRNA7, human alpha-3-beta-2 (CHRNA3-CHRNB2), human alpha-4-beta-2 (CHRNA4-CHRNB2), mouse adult muscular subtype alpha-1-beta-1-delta-epsilon (CHRNA1-CHRNB1-CHRND-CHRNE), and mouse fetal muscular subtype alpha-1-beta-1-gamma-delta (CHRNA1-CHRNB1-CHRNG-CHRND). Shows different dissociation rates towards the different subtypes, with a very slow rate towards alpha-7 subtype (almost irreversible), followed by the adult muscular subtype, the fetal muscular subtype, alpha-3-beta-2 and alpha-4-beta-2 (almost entirely reversible within a few minutes of washing). In Conus fergusoni (Ferguson's cone), this protein is Alpha-conotoxin FrXXA.